The primary structure comprises 442 residues: 6-phospho-alpha-glucosidase 1 (442 aa).

6–72 (FSVLIAGGGS…PEVEFLATTD (67 aa)) provides a ligand contact to NAD(+). Residues Arg-95 and Asn-149 each coordinate substrate. Position 171 (Cys-171) interacts with Mn(2+). Residue Asp-172 is the Proton donor of the active site. His-202 contacts Mn(2+). Tyr-265 functions as the Proton acceptor in the catalytic mechanism. Arg-285 provides a ligand contact to substrate.

Belongs to the glycosyl hydrolase 4 family. In terms of assembly, homodimer. May also form homotetramer. It depends on Mn(2+) as a cofactor. The cofactor is Co(2+). Ni(2+) is required as a cofactor. Requires Fe(2+) as cofactor. Mg(2+) serves as cofactor. It depends on NAD(+) as a cofactor.

The catalysed reaction is alpha-maltose 6'-phosphate + H2O = D-glucose 6-phosphate + D-glucose. Its activity is regulated as follows. Is inhibited by EDTA in vitro. Functionally, is probably involved in the catabolism of alpha-glycosides accumulated via a phosphoenolpyruvate-dependent phosphotransferase system (PEP-PTS). Hydrolyzes a wide variety of 6-phospho-alpha-D-glucosides including the five isomeric derivatives of sucrose, i.e. trehalulose-6'-phosphate, turanose-6'-phosphate, maltulose-6'-phosphate, leucrose-6'-phosphate, and palatinose-6'-phosphate, but is not active on sucrose-6-phosphate. Can also hydrolyze maltose-6'-phosphate and methyl-alpha-glucose-6-phosphate, and poorly, trehalose-6-phosphate. Fails to hydrolyze beta-O-linked phosphorylated disaccharides such as cellobiose-6'-phosphate and gentiobiose-6'-phosphate. Does not seem to be involved in maltose catabolism. The sequence is that of 6-phospho-alpha-glucosidase 1 (simA) from Lacticaseibacillus paracasei (strain ATCC 334 / BCRC 17002 / CCUG 31169 / CIP 107868 / KCTC 3260 / NRRL B-441) (Lactobacillus paracasei).